We begin with the raw amino-acid sequence, 856 residues long: Vomeronasal type-2 receptor 116 (856 aa).

The N-terminal stretch at 1-18 is a signal peptide; it reads MFTLIFLFLFLNIPLLVA. The Extracellular portion of the chain corresponds to 19–586; it reads DFISPRCFWK…VFLSYEEPLG (568 aa). N94 carries an N-linked (GlcNAc...) asparagine glycan. A helical membrane pass occupies residues 587–607; that stretch reads VALSLLSLCFSAFTTVVLGIF. Over 608–622 the chain is Cytoplasmic; sequence VKHHNTPIVKANNRT. The helical transmembrane segment at 623-643 threads the bilayer; the sequence is LTYLLLISLIFCFLCPLLFIG. Residues 644-658 lie on the Extracellular side of the membrane; it reads HPNSATCILQQLTFG. Residues 659 to 679 form a helical membrane-spanning segment; the sequence is VVFTVSLSTVLAKTITVVLAF. Residues 680 to 690 lie on the Cytoplasmic side of the membrane; the sequence is KIIASQRMMKY. The helical transmembrane segment at 691-711 threads the bilayer; it reads FLISGAINYIIPICILIQVIV. The Extracellular portion of the chain corresponds to 712–745; it reads CAVWLRASPPSVDIDAHSEHGQIIIVCHKGSVNA. A helical transmembrane segment spans residues 746 to 766; sequence FYCVLGYLAILAFGSFTLAFL. Residues 767 to 778 lie on the Cytoplasmic side of the membrane; sequence SRNLPGAFNEAK. The helical transmembrane segment at 779–799 threads the bilayer; the sequence is SITFSMLVFCSVWVTFIPVYH. Residues 800 to 806 are Extracellular-facing; that stretch reads STKGKVM. Residues 807–827 traverse the membrane as a helical segment; sequence VAVEIFSTLASSAGMLGCIFV. The Cytoplasmic segment spans residues 828-856; that stretch reads PKCYTILFRQDQNSLEMIRVKSSSNVHVS.

This sequence belongs to the G-protein coupled receptor 3 family. Expressed in the vomeronasal organ.

It localises to the cell membrane. Receptor for the Esp1 pheromone. Mediates the response to Esp1 which enhances female sexual receptive behavior (lordosis) upon male mounting, resulting in successful copulation. The protein is Vomeronasal type-2 receptor 116 of Mus musculus (Mouse).